Here is a 1968-residue protein sequence, read N- to C-terminus: MGREYKFTGIAAKLNPLNCRLKLEIAEDLDERVPTTSTSCSVASVAAATATINTTAPTVLTKSELQKTLQKTSSSFSSSLATTTTTSSHLNAPVESMEGHSSLASYSHHHPSSSHHHHPGQQQSSSSSSSSHLQDFQSPPSASHPYYHQQQPQHQHQQAQQYGQATGSTNGGGQQQMTSMYGGNDYDQHQLHHQNQQHQASTSTQQFHHPQRPPPPQYDQPSSSTGSSLPPLHTVRYEQLPPPPSNQRTPTQQLQYPVKVVEAGGQAYAQQVQQAQQSNRSGAAGVNSALQPKPLPPLSSITSISSSAAGSSISAPSTSQPSTTSSLITSPPSTSSSSMAPRKTPPNASSSSLIKRQSQDVQEQQRVDFEVARNVSQIMSKNGLKVMHEPLLTGSLPQLAPLAPLPPPKSGVYQCPNCNRNLANARNLQRHRQTCGSAQHAAPQLAAMLQRSPPPCASAPPVAPPTAPSTSFQHHNSTGNLTLSYSSSSSRHQSSLYSPQLEHQDLVGNPNVMLSDGYEYKDDPMLYQGPSGLSDSIWSRDDSFHSEPPSASHDQLDMDHLGFPDPLQDPLHHLDSFDSADHRKETPRECHEPDELMTLDPTPPQCGSERFYGINIDDMPLSLDCDEPLMRSESASLSSSSQGRNTPAAVFTCEACKKSVSSERSLRRHYNTCKMFQTELAASGEERPPTTKRKPATKRPSKKKEASEGPEKNSAILAALRKEPAAPQQPQQLQFQQNYQPSPQFQAPYGGGSLPSISASWLHSASTSAAAAAPERSEMFTSPIVTSAPNPYIHQLPHQQPQQQKSSPLEDLLNEQDESADDDGDSRSSSGTVSNSTTTTTTATTTSSKSTGNPLFTCEHCARQLCSMSNLKRHRATCKVAASSSSNSAASRPPSQPSTPATAPATPMLQASQAPQPLQAPPQSPMETTATVTYTKTTVPPSVANTWNTEKAQLISPKPRSQTIFSEASSSMTVGDALRAQQHQQKMDQQIQIQFQQQQQQRFQHHQQQQQAGRIPPRPPNPILNQVQNPPQQVQHNQHQNQMLNPIRQPLLQSPPPPPPKKGLIEHKNTDLVLITSEPLAERMDAKRRSSEGLVAVTSTPLPPIQLPQRSQAPAPSRQQQQQPPVAYQVQFNGRPLPPMQLPPLQNPHNQQQQHQMLHQSQMNYQQVQQVQQVQHVQQQQNLQNQHHHQQQHHQQNQQQAPGNRSRSHSNVGKMEQEAQRQGSPLDSIITSVPLSIEVHHHIMKPGPLEQGQSSVDSQSTAEPSPRKASQQAYICPECKKTYASRKNVKRHRMAVHKLTLDEILANPEQPALDPLSAVGGAGRRHTVAGLETPDSALKPAPTKRKASEAPSAGVATKKGKAMAASVDEIQVKEEEEDQKEETVGSVERQEPPKKPVADDHKSAIAPLPPANTIMPPPPPYNQASAVPLNPPRTALPPLQLPPLQPLQSESPSWASMSAPPTALIPRTPRSSEFADEEDTRAMAKIAAELKRSAEDWPVLAVIEGVAAEPTNGEDIDEDEILIKRLRQGGVLEDVGDVSDLLRDVQGGVDGEPFSEDMLLEKNLSTASSVGLPSLASPGEQFGYQQYSQHPQQHPQQHPQQHPQQQQQVWNPNYEFQGYMQQQHPPMPVSQQFQQPLLQRPASQPPPARPIVKNSRRPSTTPKPPPNLTCSGCKKILGSDYSLRRHRAGCADVQQALNPEYPRPPKRKAAREAQKINEAEILASMPDPQMVAERSAAVAEAAAAEAAVERIGALPPPSVVHEIVHQVNADRQSMKKHNKTTSPPPAQEAPPTCAPDDPMSSSSSSSTSSASPLQGGAKPSTNQARHYCQFPECGKNFSSEWNLARHTRESCKMTTRAHSYEPTSAADKIDLIFMDKSKRRVSRTFLCTVSSLISYWLGEQGDRLELDTKWEHFQLLLDVHTLKVAITADNINLIAEQSKKYQLEHVIRMADQFMMNTNYTTPPTHVQL.

The segment covering 72–88 (TSSSFSSSLATTTTTSS) has biased composition (low complexity). 2 disordered regions span residues 72–252 (TSSS…TPTQ) and 271–364 (QVQQ…VQEQ). The span at 107-119 (SHHHPSSSHHHHP) shows a compositional bias: basic residues. 4 stretches are compositionally biased toward low complexity: residues 120–134 (GQQQ…SHLQ), 144–165 (HPYY…YGQA), 219–232 (DQPS…LPPL), and 298–338 (LSSI…SSSS). A compositionally biased stretch (polar residues) spans 346–362 (PNASSSSLIKRQSQDVQ). The C2H2-type 1 zinc finger occupies 413–440 (YQCPNCNRNLANARNLQRHRQTCGSAQH). 2 disordered regions span residues 451–499 (RSPP…LYSP) and 538–601 (WSRD…TLDP). Residues 452–467 (SPPPCASAPPVAPPTA) show a composition bias toward pro residues. The segment covering 472–482 (FQHHNSTGNLT) has biased composition (polar residues). Over residues 483–498 (LSYSSSSSRHQSSLYS) the composition is skewed to low complexity. Residues 570 to 594 (PLHHLDSFDSADHRKETPRECHEPD) are compositionally biased toward basic and acidic residues. A C2H2-type 2; degenerate zinc finger spans residues 651–672 (FTCEACKKSVSSERSLRRHYNT). 2 disordered regions span residues 681 to 712 (AASG…GPEK) and 785 to 854 (VTSA…TGNP). The segment covering 690-702 (TTKRKPATKRPSK) has biased composition (basic residues). Residues 794-804 (HQLPHQQPQQQ) show a composition bias toward low complexity. Positions 812-824 (LLNEQDESADDDG) are enriched in acidic residues. Residues 827–851 (RSSSGTVSNSTTTTTTATTTSSKST) show a composition bias toward low complexity. Residues 856 to 875 (FTCEHCARQLCSMSNLKRHR) form a C2H2-type 3; degenerate zinc finger. Disordered stretches follow at residues 882–905 (ASSS…TAPA), 975–1069 (GDAL…EHKN), 1083–1227 (RMDA…SPLD), and 1246–1273 (PGPL…SQQA). Composition is skewed to low complexity over residues 981-1015 (QQHQ…AGRI), 1023-1046 (ILNQ…MLNP), and 1108-1131 (PQRS…YQVQ). Residues 1136-1146 (PLPPMQLPPLQ) are compositionally biased toward pro residues. Positions 1147 to 1185 (NPHNQQQQHQMLHQSQMNYQQVQQVQQVQHVQQQQNLQN) are enriched in low complexity. Composition is skewed to polar residues over residues 1201–1211 (APGNRSRSHSN) and 1251–1273 (QGQS…SQQA). Residues 1274 to 1297 (YICPECKKTYASRKNVKRHRMAVH) form a C2H2-type 4 zinc finger. Disordered stretches follow at residues 1333–1478 (TPDS…ADEE), 1569–1608 (SVGL…QQQQ), 1624–1671 (HPPM…LTCS), and 1769–1822 (ADRQ…PSTN). The span at 1388–1403 (ERQEPPKKPVADDHKS) shows a compositional bias: basic and acidic residues. Composition is skewed to pro residues over residues 1407–1421 (PLPP…PPPY) and 1429–1445 (LNPP…PPLQ). Positions 1589 to 1608 (QHPQQHPQQHPQQHPQQQQQ) are enriched in low complexity. A compositionally biased stretch (polar residues) spans 1624-1633 (HPPMPVSQQF). The C2H2-type 5; degenerate zinc-finger motif lies at 1668–1694 (LTCSGCKKILGSDYSLRRHRAGCADVQ). The segment covering 1800 to 1811 (SSSSSSSTSSAS) has biased composition (low complexity). The segment at 1826 to 1858 (HYCQFPECGKNFSSEWNLARHTRESCKMTTRAH) adopts a C2H2-type 6 zinc-finger fold.

Expressed in seam cells, intestine cells, pharyngeal muscles and nerve ring neurons.

Its subcellular location is the nucleus. It localises to the cytoplasm. Its function is as follows. RNA-binding protein, which regulates the expression of proteins required to control developmental timing of events during the L2 to L3 larval stage switch. Binds to the 3'UTR of the transcript of the heterochronic protein lin-28 to post-transcriptionally negatively regulate its expression in certain tissue types in the later larval stages. During larval development, controls the timing of seam cell division and terminal differentiation into adult alae. In vitro, it can also bind to DNA through its first zinc finger. May bind directly or indirectly to the promoter of the sex-determining factor xol-1 to activate its transcription. Its activation of xol-1 transcription controls sex determination and X chromosome dosage compensation to promote male development. Through the negative regulation of lin-28 transcript, it also has a role in the fox-1-sex-1-mediated determination of sexual fate. Acts in the intestine to play a role in regulating adult lifespan. This Caenorhabditis elegans protein is Signal element on autosome protein 2.